A 579-amino-acid polypeptide reads, in one-letter code: Keratinocyte proline-rich protein (579 aa).

Ser-394 carries the phosphoserine modification. The interval 526–579 is disordered; sequence EAPYCGPSSYNQGQESGAGCGPGDVFPERRGQDGHGDQGNAFAGVKGEAKSAYF. Residues 551–561 show a composition bias toward basic and acidic residues; it reads FPERRGQDGHG.

As to expression, expressed in the upper layer of epidermis and psoriasis (at protein level). Expressed in the upper layer of epidermis and psoriasis.

Its subcellular location is the cytoplasm. The chain is Keratinocyte proline-rich protein (KPRP) from Homo sapiens (Human).